Consider the following 400-residue polypeptide: Vitamin K-dependent protein Z (400 aa).

The first 23 residues, 1–23 (MAGCVPLLQGLVLVLALHRVEPS), serve as a signal peptide directing secretion. Residues 24 to 40 (VFLPASKANDVLVRWKR) constitute a propeptide that is removed on maturation. The Gla domain occupies 41–86 (AGSYLLEELFEGNLEKECYEEICVYEEAREVFENEVVTDEFWRRYK). 13 positions are modified to 4-carboxyglutamate: Glu-47, Glu-48, Glu-51, Glu-55, Glu-57, Glu-60, Glu-61, Glu-66, Glu-67, Glu-70, Glu-73, Glu-75, and Glu-80. Residues Cys-58 and Cys-63 are joined by a disulfide bond. EGF-like domains follow at residues 87–123 (GGSP…SNCE) and 125–166 (AKNE…KQCV). Intrachain disulfides connect Cys-91–Cys-102, Cys-96–Cys-111, Cys-113–Cys-122, Cys-129–Cys-141, Cys-137–Cys-150, Cys-152–Cys-165, and Cys-203–Cys-219. The O-linked (Glc...) serine glycan is linked to Ser-93. N-linked (GlcNAc...) asparagine glycosylation occurs at Asn-99. Position 104 is a (3R)-3-hydroxyaspartate (Asp-104). In terms of domain architecture, Peptidase S1 spans 175-400 (VLTSEKRAPD…YSLWFKQIMN (226 aa)). N-linked (GlcNAc...) asparagine glycans are attached at residues Asn-225, Asn-233, Asn-306, and Asn-332. Cys-327 and Cys-341 are joined by a disulfide.

This sequence belongs to the peptidase S1 family. Interacts with SERPINA10. Post-translationally, the iron and 2-oxoglutarate dependent 3-hydroxylation of aspartate and asparagine is (R) stereospecific within EGF domains. As to expression, plasma.

It is found in the secreted. Its function is as follows. Appears to assist hemostasis by binding thrombin and promoting its association with phospholipid vesicles. Inhibits activity of the coagulation protease factor Xa in the presence of SERPINA10, calcium and phospholipids. In Homo sapiens (Human), this protein is Vitamin K-dependent protein Z (PROZ).